Here is a 331-residue protein sequence, read N- to C-terminus: 6-phosphogluconolactonase (331 aa).

Position 287 is an N6-acetyllysine (Lys-287).

It belongs to the cycloisomerase 2 family.

It carries out the reaction 6-phospho-D-glucono-1,5-lactone + H2O = 6-phospho-D-gluconate + H(+). Its pathway is carbohydrate degradation; pentose phosphate pathway; D-ribulose 5-phosphate from D-glucose 6-phosphate (oxidative stage): step 2/3. Functionally, catalyzes the hydrolysis of 6-phosphogluconolactone to 6-phosphogluconate. The chain is 6-phosphogluconolactonase from Escherichia coli O8 (strain IAI1).